Here is a 214-residue protein sequence, read N- to C-terminus: Small ribosomal subunit protein uS5 (214 aa).

The S5 DRBM domain occupies 54–117 (LKYEVVDIKV…RDAKMNIIPV (64 aa)).

The protein belongs to the universal ribosomal protein uS5 family. In terms of assembly, part of the 30S ribosomal subunit. Contacts protein S4.

Functionally, with S4 and S12 plays an important role in translational accuracy. The chain is Small ribosomal subunit protein uS5 from Saccharolobus solfataricus (strain ATCC 35092 / DSM 1617 / JCM 11322 / P2) (Sulfolobus solfataricus).